The chain runs to 235 residues: METPIIPSSSSLDRSGNSSNLLSVIPFQERTDSIIGCHFTLEIKAYHPDMMKSSEEGDVTLGSLYQGIHHIIRNKECQGLILGMDATHENKLHILALAFLCVIRKYEGKVSTYIERSKDTFSGVEQLLARIHIGDDHLGTYDPEVYQICGVEVPQGTYQLTLRTVLTPHNHTDGLSITLGIIVNSPARGMQGRSPMGVDVKRLILSFPKGTDPWTSYGEIKDKKGAVSKLKSILF.

It belongs to the nucleorhabdovirus type-2 matrix protein family. As to quaternary structure, homomultimer. Interacts with nucleoprotein and with the cytoplasmic domain of glycoprotein.

It is found in the virion membrane. The protein resides in the host endomembrane system. Plays a major role in assembly and budding of virion. Completely covers the ribonucleoprotein coil and keep it in condensed bullet-shaped form. Inhibits viral transcription and stimulates replication. This Colocasia esculenta (Wild taro) protein is Matrix protein (M).